Reading from the N-terminus, the 308-residue chain is Ornithine carbamoyltransferase (308 aa).

Carbamoyl phosphate is bound by residues 56–59, Q83, R107, and 134–137; these read STRT and HPCQ. L-ornithine contacts are provided by residues N165, D225, and 229 to 230; that span reads SM. Carbamoyl phosphate contacts are provided by residues 266–267 and R294; that span reads CL.

It belongs to the aspartate/ornithine carbamoyltransferase superfamily. OTCase family.

It is found in the cytoplasm. It carries out the reaction carbamoyl phosphate + L-ornithine = L-citrulline + phosphate + H(+). It functions in the pathway amino-acid biosynthesis; L-arginine biosynthesis; L-arginine from L-ornithine and carbamoyl phosphate: step 1/3. In terms of biological role, reversibly catalyzes the transfer of the carbamoyl group from carbamoyl phosphate (CP) to the N(epsilon) atom of ornithine (ORN) to produce L-citrulline. This is Ornithine carbamoyltransferase from Cereibacter sphaeroides (strain ATCC 17023 / DSM 158 / JCM 6121 / CCUG 31486 / LMG 2827 / NBRC 12203 / NCIMB 8253 / ATH 2.4.1.) (Rhodobacter sphaeroides).